Reading from the N-terminus, the 835-residue chain is MKTSRLSTVPTSSSSTSTSSSPSSSSGSGSSTNTVGSRLFTQTKVDNSPLDFENEKELQKKLDDIVSEFRNKDKEWTFRLKALQILQRIINGNGIEFKGWSSMLRSISPALIEQLTELRSTIVKEACASVSLLGFRMKSKFEPFALQYTQALIRMVPVKTTIISESAHQTLKDILESVSTKNLLQTFLDASLDQHNEQLRKRCSEYIYIVLSRAIENDGMILVSSVPALEKSIQKLLIDGASETRQMARYCFWAYSELNEKSATLFYTHFTPTTQKNLFTVQEHLKGDQLEFCEKLKNSLFEEEQHQKMVEDSNDLDFDLNDFKKDNNNNNNNDNNNNNNTSTTRSKTPTTGRASGLKIRSSTNTTPTTTTTTTTTTTPNKTQSSSSTSLRSGSSIGNRTEVSSSIKRPLDASNIIRSKSSLGTTRKDVITGGSGGGGGGGMSTSSQSPISKTPTTMITKTASSSSPNLATSTQSGRYSSIGTRAITTSLSKQSSSSNLTRSLPPIIKSPISPPGPTPPAPTLTKSKSTPSSPLSTPTPSKLSSSTNTTTSTSTTTTSTTPTRRISSSTTSSPIGSTTTSALKRPSTLTSTPKSSSSSSSSSSSATLSSTKTPSTTATNSTTSSATKKSFITKTNPTDEQTTTPKSITKTTTTTTTANSTSTSSIKRRSDNVDEIDIESLEISLNQDNKLAFNEISDEISNNLRDAKKGLSFYEKELTLDDLENNNNNNSNSNSNSNSNNNSKRSSVSSFTNSIKESTTADVDFNWLEDSVHDSLIDDDVLDFDENNNSTYIPRNNNNNNNNNNIIKEQQEQQEGEQQEERQQEQILDEDDELMF.

5 disordered regions span residues 1–38 (MKTS…VGSR), 317–477 (DFDL…QSGR), 489–668 (SLSK…IKRR), 721–750 (DLEN…VSSF), and 810–835 (QEQQ…ELMF). 3 stretches are compositionally biased toward low complexity: residues 7 to 37 (STVP…TVGS), 328 to 351 (NNNN…TPTT), and 361 to 395 (SSTN…SGSS). Polar residues-rich tracts occupy residues 396–406 (IGNRTEVSSSI) and 415–424 (IIRSKSSLGT). Residues 432 to 442 (GGSGGGGGGGM) are compositionally biased toward gly residues. Positions 449 to 477 (PISKTPTTMITKTASSSSPNLATSTQSGR) are enriched in polar residues. Positions 489-510 (SLSKQSSSSNLTRSLPPIIKSP) are enriched in low complexity. The span at 511–521 (ISPPGPTPPAP) shows a compositional bias: pro residues. Over residues 522-629 (TLTKSKSTPS…STTSSATKKS (108 aa)) the composition is skewed to low complexity. The segment covering 631–640 (ITKTNPTDEQ) has biased composition (polar residues). Low complexity-rich tracts occupy residues 641 to 664 (TTTP…STSS) and 724 to 750 (NNNN…VSSF). Over residues 826–835 (ILDEDDELMF) the composition is skewed to acidic residues.

This is an uncharacterized protein from Dictyostelium discoideum (Social amoeba).